We begin with the raw amino-acid sequence, 824 residues long: Glycerol-3-phosphate acyltransferase (824 aa).

The HXXXXD motif signature appears at 302–307; it reads CHRSHM.

The protein belongs to the GPAT/DAPAT family.

It is found in the cell inner membrane. The enzyme catalyses sn-glycerol 3-phosphate + an acyl-CoA = a 1-acyl-sn-glycero-3-phosphate + CoA. Its pathway is phospholipid metabolism; CDP-diacylglycerol biosynthesis; CDP-diacylglycerol from sn-glycerol 3-phosphate: step 1/3. The protein is Glycerol-3-phosphate acyltransferase of Actinobacillus pleuropneumoniae serotype 5b (strain L20).